We begin with the raw amino-acid sequence, 262 residues long: Indole-3-glycerol phosphate synthase (262 aa).

The protein belongs to the TrpC family.

The catalysed reaction is 1-(2-carboxyphenylamino)-1-deoxy-D-ribulose 5-phosphate + H(+) = (1S,2R)-1-C-(indol-3-yl)glycerol 3-phosphate + CO2 + H2O. Its pathway is amino-acid biosynthesis; L-tryptophan biosynthesis; L-tryptophan from chorismate: step 4/5. In Bordetella pertussis (strain Tohama I / ATCC BAA-589 / NCTC 13251), this protein is Indole-3-glycerol phosphate synthase.